Reading from the N-terminus, the 376-residue chain is Glucose-1-phosphate adenylyltransferase (376 aa).

Alpha-D-glucose 1-phosphate is bound by residues Tyr-101, Gly-166, 181–182 (EK), and Ser-192.

This sequence belongs to the bacterial/plant glucose-1-phosphate adenylyltransferase family. In terms of assembly, homotetramer.

The enzyme catalyses alpha-D-glucose 1-phosphate + ATP + H(+) = ADP-alpha-D-glucose + diphosphate. Its pathway is glycan biosynthesis; glycogen biosynthesis. Its function is as follows. Involved in the biosynthesis of ADP-glucose, a building block required for the elongation reactions to produce glycogen. Catalyzes the reaction between ATP and alpha-D-glucose 1-phosphate (G1P) to produce pyrophosphate and ADP-Glc. The polypeptide is Glucose-1-phosphate adenylyltransferase (Bacillus cereus (strain ATCC 10987 / NRS 248)).